The sequence spans 453 residues: uncharacterized protein (453 aa).

The protein to yeast RIT1.

This is an uncharacterized protein from Schizosaccharomyces pombe (strain 972 / ATCC 24843) (Fission yeast).